Here is a 237-residue protein sequence, read N- to C-terminus: Sugar fermentation stimulation protein homolog (237 aa).

This sequence belongs to the SfsA family.

The chain is Sugar fermentation stimulation protein homolog from Pseudomonas fluorescens (strain ATCC BAA-477 / NRRL B-23932 / Pf-5).